A 753-amino-acid polypeptide reads, in one-letter code: Lysyl oxidase homolog 3 (753 aa).

The N-terminal stretch at 1–25 (MRPVSVWQWSPWGLLLCLLCSSCLG) is a signal peptide. 2 consecutive SRCR domains span residues 44 to 145 (FRLA…VICK) and 169 to 282 (VRIR…VSCV). Disulfide bonds link Cys70–Cys134, Cys83–Cys144, Cys114–Cys124, Cys201–Cys271, Cys214–Cys281, and Cys248–Cys258. Residue Asn111 is glycosylated (N-linked (GlcNAc...) asparagine). Asn266 carries an N-linked (GlcNAc...) asparagine glycan. Positions 290-302 (SSGQKKQQQSKPQ) are enriched in low complexity. The segment at 290-315 (SSGQKKQQQSKPQGEARVRLKGGAHP) is disordered. 2 SRCR domains span residues 307–407 (VRLK…VRCN) and 417–525 (IRLS…VICS). Intrachain disulfides connect Cys332-Cys396, Cys345-Cys406, Cys376-Cys386, Cys446-Cys511, Cys459-Cys524, Cys492-Cys502, Cys554-Cys560, Cys606-Cys654, Cys638-Cys644, Cys666-Cys676, and Cys713-Cys727. N-linked (GlcNAc...) asparagine glycosylation is found at Asn390 and Asn481. Residues 529–732 (SDLLLHSALV…WVHNCHIGDA (204 aa)) form a lysyl-oxidase like region. Positions 607, 609, and 611 each coordinate Cu cation. Residue Asn625 is glycosylated (N-linked (GlcNAc...) asparagine). Positions 634-670 (KASFCLEDTECQEDVSKRYECANFGEQGITVGCWDLY) form a cross-link, lysine tyrosylquinone (Lys-Tyr). 2',4',5'-topaquinone is present on Tyr670.

The protein belongs to the lysyl oxidase family. In terms of assembly, interacts with STAT3. Requires Cu cation as cofactor. The cofactor is lysine tyrosylquinone residue. Post-translationally, the lysine tyrosylquinone cross-link (LTQ) is generated by condensation of the epsilon-amino group of a lysine with a topaquinone produced by oxidation of tyrosine. In terms of tissue distribution, isoform 1: Predominantly detected in the heart, placenta, lung, and small intestine. Isoform 2: Highly detected in the kidney, pancreas, spleen, and thymus, and is absent in lung. In eye, present in all layers of corneas as well as in the limbus and conjunctiva (at protein level).

It localises to the secreted. The protein localises to the extracellular space. Its subcellular location is the cytoplasm. The protein resides in the nucleus. It catalyses the reaction L-lysyl-[protein] + O2 + H2O = (S)-2-amino-6-oxohexanoyl-[protein] + H2O2 + NH4(+). The catalysed reaction is N(6)-acetyl-L-lysyl-[protein] + O2 + H2O = acetamide + (S)-2-amino-6-oxohexanoyl-[protein] + H2O2. In terms of biological role, protein-lysine 6-oxidase that mediates the oxidation of peptidyl lysine residues to allysine in target proteins. Catalyzes the post-translational oxidative deamination of peptidyl lysine residues in precursors of elastin and different types of collagens, a prerequisite in the formation of cross-links between collagens and elastin. Required for somite boundary formation by catalyzing oxidation of fibronectin (FN1), enhancing integrin signaling in myofibers and their adhesion to the myotendinous junction (MTJ). Acts as a regulator of inflammatory response by inhibiting differentiation of naive CD4(+) T-cells into T-helper Th17 or regulatory T-cells (Treg): acts by interacting with STAT3 in the nucleus and catalyzing both deacetylation and oxidation of lysine residues on STAT3, leading to disrupt STAT3 dimerization and inhibit STAT3 transcription activity. Oxidation of lysine residues to allysine on STAT3 preferentially takes place on lysine residues that are acetylated. Also able to catalyze deacetylation of lysine residues on STAT3. Its function is as follows. Shows protein-lysine 6-oxidase activity toward elastin and different types of collagens, with the highest activity toward collagen type VIII. Shows protein-lysine 6-oxidase activity toward elastin and different types of collagens, with the highest activity toward collagen type IV. This Homo sapiens (Human) protein is Lysyl oxidase homolog 3.